The sequence spans 91 residues: MARSLKKGPFADEHLLKKVEKAIESKSRKPIKTWSRRSTIFPDFVNLTFQVHNGKNFIDVFVTDDMVGHKLGEFAPTRTFGGHGEDKRKKK.

This sequence belongs to the universal ribosomal protein uS19 family.

In terms of biological role, protein S19 forms a complex with S13 that binds strongly to the 16S ribosomal RNA. This chain is Small ribosomal subunit protein uS19 (rpsS), found in Mycoplasmopsis pulmonis (strain UAB CTIP) (Mycoplasma pulmonis).